A 1040-amino-acid polypeptide reads, in one-letter code: Multidrug resistance protein MdtB (1040 aa).

A run of 12 helical transmembrane segments spans residues 16–36 (FIMRPVATTLLMVAILLAGII), 342–362 (DTQFELMLAIALVVMIIYLFL), 369–389 (IIPGVAVPLSLVGTFAVMVFL), 396–416 (LTLMALTIATGFVVDDAIVVI), 440–460 (IGFTIISLTFSLIAVLIPLLF), 472–492 (FAVTLAVAILISAVVSLTLTP), 537–557 (WLTLGVALSTLALSIILWVFI), 863–883 (LGSTVWLVVAAVVAMYIVLGV), 888–908 (FIHPITILSTLPTAGVGALLA), 911–931 (LAGSELDVIAIIGIILLIGIV), 968–988 (ILMTTLAALLGALPLMLSTGV), and 998–1018 (IGMVGGLMLSQVLTLFTTPVI).

The protein belongs to the resistance-nodulation-cell division (RND) (TC 2.A.6) family. MdtB subfamily. As to quaternary structure, part of a tripartite efflux system composed of MdtA, MdtB and MdtC. MdtB forms a heteromultimer with MdtC.

The protein localises to the cell inner membrane. The chain is Multidrug resistance protein MdtB from Klebsiella pneumoniae subsp. pneumoniae (strain ATCC 700721 / MGH 78578).